The following is a 340-amino-acid chain: Centromere protein N (340 aa).

Serine 227 and serine 236 each carry phosphoserine.

The protein belongs to the CENP-N/CHL4 family. In terms of assembly, component of the CENPA-NAC complex, at least composed of CENPA, CENPC, CENPH, CENPM, CENPN, CENPT and CENPU. The CENPA-NAC complex interacts with the CENPA-CAD complex, composed of CENPI, CENPK, CENPL, CENPO, CENPP, CENPQ, CENPR and CENPS. Interacts directly with CENPA. Identified in a centromere complex containing histones H2A, H2B and H4, and at least CENPA, CENPB, CENPC, CENPT, CENPN, HJURP, SUPT16H, SSRP1 and RSF1.

It localises to the nucleus. The protein resides in the chromosome. Its subcellular location is the centromere. It is found in the kinetochore. Its function is as follows. Component of the CENPA-NAC (nucleosome-associated) complex, a complex that plays a central role in assembly of kinetochore proteins, mitotic progression and chromosome segregation. The CENPA-NAC complex recruits the CENPA-CAD (nucleosome distal) complex and may be involved in incorporation of newly synthesized CENPA into centromeres. CENPN is the first protein to bind specifically to CENPA nucleosomes and the direct binding of CENPA nucleosomes by CENPN is required for centromere assembly. Required for chromosome congression and efficiently align the chromosomes on a metaphase plate. This is Centromere protein N (Cenpn) from Rattus norvegicus (Rat).